The chain runs to 458 residues: N-acetylgalactosamine kinase (458 aa).

Residues arginine 43, glutamate 49, histidine 50, and aspartate 52 each coordinate alpha-D-galactose. Glycine 143, serine 145, and serine 146 together coordinate ATP. Aspartate 190 contributes to the alpha-D-galactose binding site. The active-site Proton acceptor is aspartate 190. Positions 233 and 234 each coordinate ATP.

It belongs to the GHMP kinase family. GalK subfamily. As to quaternary structure, monomer.

It catalyses the reaction N-acetyl-alpha-D-galactosamine + ATP = N-acetyl-alpha-D-galactosamine 1-phosphate + ADP + H(+). Its function is as follows. Acts on GalNAc. Also acts as a galactokinase when galactose is present at high concentrations. This Mus musculus (Mouse) protein is N-acetylgalactosamine kinase (Galk2).